Reading from the N-terminus, the 930-residue chain is Protein translocase subunit SecA (930 aa).

ATP is bound by residues glutamine 87, 105 to 109 (GEGKT), and aspartate 516. The Zn(2+) site is built by cysteine 914, cysteine 916, cysteine 925, and histidine 926.

It belongs to the SecA family. As to quaternary structure, monomer and homodimer. Part of the essential Sec protein translocation apparatus which comprises SecA, SecYEG and auxiliary proteins SecDF-YajC and YidC. Requires Zn(2+) as cofactor.

The protein resides in the cell inner membrane. Its subcellular location is the cytoplasm. It carries out the reaction ATP + H2O + cellular proteinSide 1 = ADP + phosphate + cellular proteinSide 2.. Its function is as follows. Part of the Sec protein translocase complex. Interacts with the SecYEG preprotein conducting channel. Has a central role in coupling the hydrolysis of ATP to the transfer of proteins into and across the cell membrane, serving both as a receptor for the preprotein-SecB complex and as an ATP-driven molecular motor driving the stepwise translocation of polypeptide chains across the membrane. This Variovorax paradoxus (strain S110) protein is Protein translocase subunit SecA.